A 98-amino-acid chain; its full sequence is Integration host factor subunit beta (98 aa).

It belongs to the bacterial histone-like protein family. Heterodimer of an alpha and a beta chain.

Functionally, this protein is one of the two subunits of integration host factor, a specific DNA-binding protein that functions in genetic recombination as well as in transcriptional and translational control. In Hahella chejuensis (strain KCTC 2396), this protein is Integration host factor subunit beta.